The sequence spans 107 residues: Urease subunit beta (107 aa).

It belongs to the urease beta subunit family. Heterotrimer of UreA (gamma), UreB (beta) and UreC (alpha) subunits. Three heterotrimers associate to form the active enzyme.

The protein localises to the cytoplasm. The enzyme catalyses urea + 2 H2O + H(+) = hydrogencarbonate + 2 NH4(+). It participates in nitrogen metabolism; urea degradation; CO(2) and NH(3) from urea (urease route): step 1/1. The chain is Urease subunit beta from Janthinobacterium sp. (strain Marseille) (Minibacterium massiliensis).